The chain runs to 189 residues: Phosphoheptose isomerase (189 aa).

The region spanning 34–189 is the SIS domain; it reads LVAALKGGKK…CDLVEKGLFK (156 aa). Residue 49–51 participates in substrate binding; sequence NGG. The Zn(2+) site is built by H58 and E62. Residues E62, 91–92, 117–119, S122, and Q169 each bind substrate; these read ND and STS. 2 residues coordinate Zn(2+): Q169 and H177.

Belongs to the SIS family. GmhA subfamily. In terms of assembly, homotetramer. Zn(2+) serves as cofactor.

Its subcellular location is the cytoplasm. The enzyme catalyses 2 D-sedoheptulose 7-phosphate = D-glycero-alpha-D-manno-heptose 7-phosphate + D-glycero-beta-D-manno-heptose 7-phosphate. The protein operates within carbohydrate biosynthesis; D-glycero-D-manno-heptose 7-phosphate biosynthesis; D-glycero-alpha-D-manno-heptose 7-phosphate and D-glycero-beta-D-manno-heptose 7-phosphate from sedoheptulose 7-phosphate: step 1/1. In terms of biological role, catalyzes the isomerization of sedoheptulose 7-phosphate in D-glycero-D-manno-heptose 7-phosphate. In Geobacter metallireducens (strain ATCC 53774 / DSM 7210 / GS-15), this protein is Phosphoheptose isomerase.